We begin with the raw amino-acid sequence, 262 residues long: Ribosomal RNA small subunit methyltransferase A (262 aa).

S-adenosyl-L-methionine is bound by residues H13, L15, G40, E61, D85, and N103.

The protein belongs to the class I-like SAM-binding methyltransferase superfamily. rRNA adenine N(6)-methyltransferase family. RsmA subfamily.

It is found in the cytoplasm. It carries out the reaction adenosine(1518)/adenosine(1519) in 16S rRNA + 4 S-adenosyl-L-methionine = N(6)-dimethyladenosine(1518)/N(6)-dimethyladenosine(1519) in 16S rRNA + 4 S-adenosyl-L-homocysteine + 4 H(+). In terms of biological role, specifically dimethylates two adjacent adenosines (A1518 and A1519) in the loop of a conserved hairpin near the 3'-end of 16S rRNA in the 30S particle. May play a critical role in biogenesis of 30S subunits. This is Ribosomal RNA small subunit methyltransferase A from Bordetella avium (strain 197N).